The primary structure comprises 256 residues: Capsid protein (256 aa).

The short motif at 3–20 is the Bipartite nuclear localization signal element; the sequence is KRPADIVISTPASKVRRK. The Nuclear localization signal signature appears at 40–54; sequence RRRTWVNRPMYRKPM. The segment at 68-85 is a zinc-finger region; the sequence is CEGPCKVQSYEQRHDVAH. The Nuclear export signal motif lies at 101–122; it reads ITHRTGKRFCIKSIYVLGKIWM. Positions 200-247 match the Bipartite nuclear localization signal motif; that stretch reads NRFYKIYNHCTYNHQEAAKYENHTENALLLYMACTHASNPVYATLKIR.

It belongs to the geminiviridae capsid protein family. As to quaternary structure, homomultimer. Binds to single-stranded and double-stranded viral DNA. Interacts (via nuclear localization signals) with host importin alpha-1a.

Its subcellular location is the virion. The protein resides in the host nucleus. Encapsidates the viral genome into characteristic twinned ('geminate') particles. Binds the genomic viral ssDNA and shuttles it into and out of the cell nucleus. Plays a role in protection of the genome from degradation, virus acquisition and transmission by insect vectors, infectivity, and systemic movement. The CP of monopartite geminiviruses is absolutely essential for virus movement. The protein is Capsid protein of Tomato leaf curl virus (strain Australia) (ToLCV).